A 122-amino-acid chain; its full sequence is Fluoride-specific ion channel FluC (122 aa).

The next 4 helical transmembrane spans lie at 4–24 (LLIA…GTAI), 34–54 (IGTM…MTLL), 66–86 (LALV…EWET), and 95–115 (FWIG…AVWF). Residues Gly74 and Thr77 each contribute to the Na(+) site.

Belongs to the fluoride channel Fluc/FEX (TC 1.A.43) family.

The protein resides in the cell inner membrane. The enzyme catalyses fluoride(in) = fluoride(out). Its activity is regulated as follows. Na(+) is not transported, but it plays an essential structural role and its presence is essential for fluoride channel function. In terms of biological role, fluoride-specific ion channel. Important for reducing fluoride concentration in the cell, thus reducing its toxicity. This Solibacter usitatus (strain Ellin6076) protein is Fluoride-specific ion channel FluC.